Reading from the N-terminus, the 428-residue chain is Palmitoyltransferase pfa4 (428 aa).

The Cytoplasmic segment spans residues 1 to 10; that stretch reads MLCRSFNISQ. A helical membrane pass occupies residues 11–31; that stretch reads LAIPFVSVLISFLAYTSQLFF. The Lumenal segment spans residues 32 to 43; it reads YYFEEAPLRSEE. A helical membrane pass occupies residues 44–61; sequence FWRLNIFAVCIWVCYYRA. Residues 62 to 134 are Cytoplasmic-facing; it reads CTVDPGRIPK…SNCVSHFTYP (73 aa). A DHHC domain is found at 91–141; it reads RWCRRCEAFKPPRAHHCKTCQRCIPKMDHHCPWTSNCVSHFTYPHFMRFLF. Cys-121 functions as the S-palmitoyl cysteine intermediate in the catalytic mechanism. The chain crosses the membrane as a helical span at residues 135-155; the sequence is HFMRFLFYAVVGMGYLETLLF. The Lumenal segment spans residues 156-177; the sequence is ERASIVWASRHLPSYLGPGLGQ. Residues 178-198 traverse the membrane as a helical segment; sequence LVHLFILLVVNSLTWLALFIL. Over 199–428 the chain is Cytoplasmic; the sequence is LLRSIWSLAL…GILMQRRRQQ (230 aa). The interval 339 to 400 is disordered; it reads QRSNDASHSG…WKNSEGDRLR (62 aa). Basic and acidic residues predominate over residues 360–373; that stretch reads DRFNENKAKERLSE. Over residues 374–388 the composition is skewed to acidic residues; the sequence is SESDFSDDEEVQDGE. The span at 389–400 shows a compositional bias: basic and acidic residues; it reads EGWKNSEGDRLR.

Belongs to the DHHC palmitoyltransferase family. PFA4 subfamily.

It localises to the endoplasmic reticulum membrane. The catalysed reaction is L-cysteinyl-[protein] + hexadecanoyl-CoA = S-hexadecanoyl-L-cysteinyl-[protein] + CoA. Its function is as follows. Mediates the reversible addition of palmitate to target proteins, thereby regulating their membrane association and biological function. This is Palmitoyltransferase pfa4 from Aspergillus fumigatus (strain ATCC MYA-4609 / CBS 101355 / FGSC A1100 / Af293) (Neosartorya fumigata).